We begin with the raw amino-acid sequence, 387 residues long: Putative glutamate--cysteine ligase 2 (387 aa).

The protein belongs to the glutamate--cysteine ligase type 2 family. YbdK subfamily.

The catalysed reaction is L-cysteine + L-glutamate + ATP = gamma-L-glutamyl-L-cysteine + ADP + phosphate + H(+). Its function is as follows. ATP-dependent carboxylate-amine ligase which exhibits weak glutamate--cysteine ligase activity. The protein is Putative glutamate--cysteine ligase 2 of Pseudomonas fluorescens (strain ATCC BAA-477 / NRRL B-23932 / Pf-5).